A 496-amino-acid polypeptide reads, in one-letter code: Protein TOO MANY MOUTHS (496 aa).

The N-terminal stretch at 1–23 is a signal peptide; it reads MARYEFFRQIFIVLSIVSPLVRS. Residues 24–473 lie on the Extracellular side of the membrane; that stretch reads FTVITSDSTA…ATDVSSTSKS (450 aa). 10 LRR repeats span residues 158–182, 183–208, 210–228, 229–252, 254–276, 277–300, 302–325, 326–350, 351–373, and 375–401; these read GSSL…LGNL, TNLK…RFSG, RSLD…GFVL, PALS…LTSC, SLIK…INRL, NQLV…LQGL, SLQA…AFKG, LKNL…LTRL, NSLR…EFRD, and KHLS…VWRM. N-linked (GlcNAc...) asparagine glycans are attached at residues Asn181 and Asn196. A glycan (N-linked (GlcNAc...) asparagine) is linked at Asn362. The disordered stretch occupies residues 438–464; that stretch reads AETSRPAPSGTVQHLSREEDGALPDGA. The chain crosses the membrane as a helical span at residues 474–494; it reads LGFSYLSAFFLVFPNFIFMLI. The Cytoplasmic portion of the chain corresponds to 495-496; sequence SS.

This sequence belongs to the RLP family. Forms heterodimer with ERECTA or ERL1 through their extracellular domains. Not able to form homodimer. Interacts with EPF2 but not with EPF1. Interacts with SERK1, SERK2, SERK3/BAK1 and SERK4. Interacts with EPFL9/STOMAGEN. As to expression, in epidermal cells of developing shoots and leaves, but not in roots. Expressed in the stomatal cell lineage in the developing epidermis. Accumulates strongly in meristemoid mother cells (MMC) and meristemoids, somewhat less in meristemoid sister cells (stomatal-lineage ground cells, SLGC), and is barely detected in pavement cells.

The protein resides in the cell membrane. Promotes cell fate progression in stomatal development. In leaves, needed to correctly orient spacing divisions, to limit the number of asymmetric divisions in neighbor cells, and to promote the asymmetric (amplifying) divisions of meristemoids. In stems, promotes the conversion of meristemoids into guard mother cells (GMC). Positively regulates CAPRICE (CPC) expression in differentiating stomaless-forming cell files. Forms constitutive complexes with ERECTA and ERL1 involved in the recognition of the stomatal regulatory peptides EPF1, EPF2 and EPFL9/STOMAGEN. Modulates the activity of the ligand-receptor pairs EPF2-ERECTA and EPF1-ERL1 in stomatal development. Functions in a combinatorial specific manner with the ERECTA-family (ERf) receptor kinases in the regulation of the immune response. This Arabidopsis thaliana (Mouse-ear cress) protein is Protein TOO MANY MOUTHS.